We begin with the raw amino-acid sequence, 561 residues long: Malate synthase, glyoxysomal (561 aa).

The active-site Proton acceptor is the Arg177. Asp462 acts as the Proton donor in catalysis. Positions 559–561 (SRL) match the Microbody targeting signal motif.

Belongs to the malate synthase family.

Its subcellular location is the glyoxysome. The catalysed reaction is glyoxylate + acetyl-CoA + H2O = (S)-malate + CoA + H(+). It functions in the pathway carbohydrate metabolism; glyoxylate cycle; (S)-malate from isocitrate: step 2/2. This is Malate synthase, glyoxysomal from Brassica napus (Rape).